A 417-amino-acid chain; its full sequence is Serine protease hepsin (417 aa).

Over 1–23 (MAQKEGGRTVPCCSRPKVAALTA) the chain is Cytoplasmic. A helical; Signal-anchor for type II membrane protein transmembrane segment spans residues 24 to 44 (GTLLLLTAIGAASWAIVAVLL). The Extracellular segment spans residues 45-417 (RSDQEPLYPV…SEASGMVTQL (373 aa)). Residues 54-151 (VQVSSADARL…RGRFLATICQ (98 aa)) enclose the SRCR domain. Cystine bridges form between Cys77-Cys140, Cys90-Cys150, Cys119-Cys138, Cys153-Cys277, Cys188-Cys204, Cys291-Cys359, Cys322-Cys338, and Cys349-Cys381. Residue Asn112 is glycosylated (N-linked (GlcNAc...) asparagine). A Peptidase S1 domain is found at 163–405 (IVGGRDTSLG…FREWIFQAIK (243 aa)). Catalysis depends on charge relay system residues His203 and Asp257. The active-site Charge relay system is Ser353.

The protein belongs to the peptidase S1 family.

It is found in the membrane. It catalyses the reaction Cleavage after basic amino-acid residues, with Arg strongly preferred to Lys.. Functionally, plays an essential role in cell growth and maintenance of cell morphology. May mediate the activating cleavage of HGF and MST1/HGFL. Plays a role in the proteolytic processing of ACE2. The sequence is that of Serine protease hepsin (HPN) from Pongo abelii (Sumatran orangutan).